Here is a 200-residue protein sequence, read N- to C-terminus: dTTP/UTP pyrophosphatase (200 aa).

Asp-80 functions as the Proton acceptor in the catalytic mechanism.

It belongs to the Maf family. YhdE subfamily. A divalent metal cation is required as a cofactor.

Its subcellular location is the cytoplasm. The catalysed reaction is dTTP + H2O = dTMP + diphosphate + H(+). It catalyses the reaction UTP + H2O = UMP + diphosphate + H(+). Its function is as follows. Nucleoside triphosphate pyrophosphatase that hydrolyzes dTTP and UTP. May have a dual role in cell division arrest and in preventing the incorporation of modified nucleotides into cellular nucleic acids. This chain is dTTP/UTP pyrophosphatase, found in Pasteurella multocida (strain Pm70).